A 1393-amino-acid polypeptide reads, in one-letter code: DNA glycosylase/AP lyase ROS1 (1393 aa).

3 disordered regions span residues 1–25 (MEKQ…MKPF), 98–186 (SLSS…TSTR), and 237–265 (LSAP…SNLE). The segment covering 98-108 (SLSSVSNNVAE) has biased composition (low complexity). A compositionally biased stretch (basic residues) spans 117-126 (PKRKKHRPKV). Basic and acidic residues-rich tracts occupy residues 127-138 (RREAKPKREPKP) and 162-171 (KKVEVSKDQD). Positions 243-256 (PKRKRSQGKRKGVQ) are enriched in basic residues. Positions 528–626 (KVDLDDETDR…AFMSLASQFP (99 aa)) are DEMETER. Polar residues predominate over residues 653–672 (EETMSSPPDHNHSSVTLKNT). Disordered stretches follow at residues 653 to 722 (EETM…SVEV) and 789 to 830 (SNQV…CSQQ). A compositionally biased stretch (low complexity) spans 687 to 698 (SRSSSEIAISAH). Basic and acidic residues predominate over residues 699-722 (ESVDKTTDSKEYVDSDRKGSSVEV). Over residues 816-830 (KSSVDSSEPGCCSQQ) the composition is skewed to polar residues. A Glycyl lysine isopeptide (Lys-Gly) (interchain with G-Cter in ubiquitin) cross-link involves residue K901. [4Fe-4S] cluster is bound by residues C1038, C1045, C1048, and C1054.

Belongs to the DNA glycosylase family. DEMETER subfamily. Interacts (via the central region) with ZDP. Binds to RPA2A. Interacts with XRCC1. Interacts probably with a complex made of MBD7, IDM1, IDM2 and IDM3. Interacts with APE1L. [4Fe-4S] cluster serves as cofactor. In terms of tissue distribution, expressed ubiquitously in both vegetative and reproductive organs.

It is found in the nucleus. It localises to the nucleolus. It carries out the reaction 2'-deoxyribonucleotide-(2'-deoxyribose 5'-phosphate)-2'-deoxyribonucleotide-DNA = a 3'-end 2'-deoxyribonucleotide-(2,3-dehydro-2,3-deoxyribose 5'-phosphate)-DNA + a 5'-end 5'-phospho-2'-deoxyribonucleoside-DNA + H(+). Its activity is regulated as follows. Stimulated by ZDP. Stimulated by XRCC1. Its function is as follows. Bifunctional DNA glycosylase/lyase, which excises 5-methylcytosine (5-meC) and 5-hydroxymethylcytosine (5-hmeC), leaving an apyrimidinic (AP) site that is subsequently incised by the lyase activity. Generates 3'-phosphor-alpha,beta-unsaturated aldehyde (3'-PUA) as a primary 5-meC excision intermediate. Prevents DNA hypermethylation, specifically in the promoter of otherwise silenced loci. May be involved in DNA repair through its nicking activity on methylated DNA. Binds with similar affinity to both methylated and non-methylated DNA. Highly distributive behavior on DNA substrates containing multiple 5-meC residues. Involved with Pol IV in the remodeling of the 5S rDNA chromatin via DNA methylation modifications during the first days of development post-germination. Participates in UV-B induced- and oxidative DNA damage repair. In Arabidopsis thaliana (Mouse-ear cress), this protein is DNA glycosylase/AP lyase ROS1.